The chain runs to 375 residues: 2-heptyl-3-hydroxy-4(1H)-quinolone synthase (375 aa).

This sequence belongs to the 3-hydroxybenzoate 6-hydroxylase family.

It carries out the reaction 2-heptyl-4(1H)-quinolone + NADH + O2 + H(+) = 2-heptyl-3-hydroxy-4(1H)-quinolone + NAD(+) + H2O. In terms of biological role, involved in the degradation pathway of the Pseudomonas aeruginosa quorum sensing signal molecule HHQ (2-heptyl-4(1H)-quinolone) to anthranilate. Catalyzes the hydroxylation of HHQ to PQS (2-heptyl-3-hydroxy-4(1H)-quinolone). The chain is 2-heptyl-3-hydroxy-4(1H)-quinolone synthase from Mycobacteroides abscessus (strain ATCC 19977 / DSM 44196 / CCUG 20993 / CIP 104536 / JCM 13569 / NCTC 13031 / TMC 1543 / L948) (Mycobacterium abscessus).